The sequence spans 179 residues: Calcineurin subunit B type 2 (179 aa).

Residue glycine 2 is the site of N-myristoyl glycine attachment. EF-hand domains follow at residues 18-53 (EEIR…QQNP), 57-85 (RVID…FSVK), 87-122 (DEEQ…MVGN), and 128-163 (QLQQ…MEIH). 14 residues coordinate Ca(2+): aspartate 31, aspartate 33, serine 35, serine 37, glutamate 42, aspartate 63, aspartate 65, asparagine 67, glutamate 69, glutamate 74, aspartate 100, aspartate 102, aspartate 104, and glutamate 111. Residues 131–136 (QLVDKS) form a calcineurin A binding region. Aspartate 141, aspartate 143, aspartate 145, arginine 147, and glutamate 152 together coordinate Ca(2+).

The protein belongs to the calcineurin regulatory subunit family. In terms of assembly, forms a complex composed of a calmodulin-dependent catalytic subunit (also known as calcineurin A) and a regulatory Ca(2+)-binding subunit (also known as calcineurin B). There are three catalytic subunits, each encoded by a separate gene (PPP3CA, PPP3CB, and PPP3CC) and two regulatory subunits which are also encoded by separate genes (PPP3R1 and PPP3R2). Interacts with SPATA33 (via PQIIIT motif). Expressed in osteoblasts and bone marrow (at protein level). Expressed in the testis. Expressed in the sperm midpiece in a SPATA33-dependent manner (at protein level).

It is found in the mitochondrion. In terms of biological role, regulatory subunit of calcineurin, a calcium-dependent, calmodulin stimulated protein phosphatase. Confers calcium sensitivity. The protein is Calcineurin subunit B type 2 (Ppp3r2) of Mus musculus (Mouse).